A 291-amino-acid polypeptide reads, in one-letter code: 33 kDa chaperonin (291 aa).

2 disulfide bridges follow: C237–C239 and C270–C273.

This sequence belongs to the HSP33 family. Under oxidizing conditions two disulfide bonds are formed involving the reactive cysteines. Under reducing conditions zinc is bound to the reactive cysteines and the protein is inactive.

The protein resides in the cytoplasm. In terms of biological role, redox regulated molecular chaperone. Protects both thermally unfolding and oxidatively damaged proteins from irreversible aggregation. Plays an important role in the bacterial defense system toward oxidative stress. The protein is 33 kDa chaperonin of Bacillus anthracis (strain A0248).